The following is an 83-amino-acid chain: Small ribosomal subunit protein bS16 (83 aa).

This sequence belongs to the bacterial ribosomal protein bS16 family.

This Shewanella denitrificans (strain OS217 / ATCC BAA-1090 / DSM 15013) protein is Small ribosomal subunit protein bS16.